The chain runs to 708 residues: Polyribonucleotide nucleotidyltransferase (708 aa).

Positions 486 and 492 each coordinate Mg(2+). Residues 553-612 (PRIIKFKINPEKIRDVIGKGGAVIRALTEETGTTIDISDDGSVTIACVSSEGGEQARKRI) form the KH domain. The region spanning 622–690 (GRIYEGTVLK…EKGRLRLSMK (69 aa)) is the S1 motif domain.

This sequence belongs to the polyribonucleotide nucleotidyltransferase family. The cofactor is Mg(2+).

It is found in the cytoplasm. It carries out the reaction RNA(n+1) + phosphate = RNA(n) + a ribonucleoside 5'-diphosphate. Its function is as follows. Involved in mRNA degradation. Catalyzes the phosphorolysis of single-stranded polyribonucleotides processively in the 3'- to 5'-direction. The sequence is that of Polyribonucleotide nucleotidyltransferase from Nitrosomonas europaea (strain ATCC 19718 / CIP 103999 / KCTC 2705 / NBRC 14298).